The chain runs to 192 residues: Flavin prenyltransferase UbiX (192 aa).

Residues 10–12 (GAS), Ser36, 92–95 (SMTT), and Arg127 each bind FMN. Residues Tyr157 and Lys173 each contribute to the dimethylallyl phosphate site.

Belongs to the UbiX/PAD1 family.

It carries out the reaction dimethylallyl phosphate + FMNH2 = prenylated FMNH2 + phosphate. Flavin prenyltransferase that catalyzes the synthesis of the prenylated FMN cofactor (prenyl-FMN) for 4-hydroxy-3-polyprenylbenzoic acid decarboxylase UbiD. The prenyltransferase is metal-independent and links a dimethylallyl moiety from dimethylallyl monophosphate (DMAP) to the flavin N5 and C6 atoms of FMN. The protein is Flavin prenyltransferase UbiX of Chlamydia pneumoniae (Chlamydophila pneumoniae).